Reading from the N-terminus, the 530-residue chain is 26S proteasome non-ATPase regulatory subunit 3 (530 aa).

Residues 1–16 (MKQEGSARRRGADKAK) are compositionally biased toward basic and acidic residues. The disordered stretch occupies residues 1-65 (MKQEGSARRR…TEHSQRELDT (65 aa)). Residues 17–30 (PPPGGEQEPPPPAP) are compositionally biased toward pro residues. Residue Lys-36 forms a Glycyl lysine isopeptide (Lys-Gly) (interchain with G-Cter in SUMO1); alternate linkage. A Glycyl lysine isopeptide (Lys-Gly) (interchain with G-Cter in SUMO2); alternate cross-link involves residue Lys-36. The region spanning 282–461 (ARYLYYTGRI…GYVQSKEMID (180 aa)) is the PCI domain. Ser-414 and Ser-426 each carry phosphoserine. Positions 496–530 (SYNKDLESAEERREREQQDLEFAKEMAEDDDDSFP) are disordered. The span at 497–521 (YNKDLESAEERREREQQDLEFAKEM) shows a compositional bias: basic and acidic residues.

It belongs to the proteasome subunit S3 family. As to quaternary structure, component of the 19S proteasome regulatory particle complex. The 26S proteasome consists of a 20S core particle (CP) and two 19S regulatory subunits (RP). The regulatory particle is made of a lid composed of 9 subunits including PSMD3, a base containing 6 ATPases and few additional components. Interacts with UBQLN1 (via ubiquitin-like domain). Interacts with ERCC6.

In terms of biological role, component of the 26S proteasome, a multiprotein complex involved in the ATP-dependent degradation of ubiquitinated proteins. This complex plays a key role in the maintenance of protein homeostasis by removing misfolded or damaged proteins, which could impair cellular functions, and by removing proteins whose functions are no longer required. Therefore, the proteasome participates in numerous cellular processes, including cell cycle progression, apoptosis, or DNA damage repair. In Mus musculus (Mouse), this protein is 26S proteasome non-ATPase regulatory subunit 3 (Psmd3).